The chain runs to 211 residues: MAIQESKQIQVLRFIHEAQLNNGYPPTVREVGEAVGLSSSSTIHGHIERLVKKGYLLKDASKPRARAIEVTDSGLEALGVSTTPGRIPVLGQVTAGAPILAVEEEATEFFPIPDNLMQFDGDMFMLNVRGNSMINIGILDGDKVIVRKQDNADNGDVVVAMNDDDEATVKRFFREADHFRLQPENDAMAPIILKQVAILGKVIGLYRDAIY.

Positions 28–48 form a DNA-binding region, H-T-H motif; it reads VREVGEAVGLSSSSTIHGHIE. Residues Ser-132 and Lys-170 each act as for autocatalytic cleavage activity in the active site.

This sequence belongs to the peptidase S24 family. In terms of assembly, homodimer.

The enzyme catalyses Hydrolysis of Ala-|-Gly bond in repressor LexA.. In terms of biological role, represses a number of genes involved in the response to DNA damage (SOS response), including recA and lexA. In the presence of single-stranded DNA, RecA interacts with LexA causing an autocatalytic cleavage which disrupts the DNA-binding part of LexA, leading to derepression of the SOS regulon and eventually DNA repair. This is LexA repressor from Leuconostoc citreum (strain KM20).